We begin with the raw amino-acid sequence, 767 residues long: DNA topoisomerase 1 (767 aa).

Over residues Met1–Lys23 the composition is skewed to basic and acidic residues. Positions Met1–Glu201 are disordered. Ser2 bears the N-acetylserine mark. Residues Ser2 and Ser10 each carry the phosphoserine modification. Residues His24–Lys39 are compositionally biased toward basic residues. Residues Lys40–Asn110 show a composition bias toward basic and acidic residues. Ser59 carries the post-translational modification Phosphoserine. A Glycyl lysine isopeptide (Lys-Gly) (interchain with G-Cter in SUMO2) cross-link involves residue Lys103. Lys105 is covalently cross-linked (Glycyl lysine isopeptide (Lys-Gly) (interchain with G-Cter in SUMO); alternate). A Glycyl lysine isopeptide (Lys-Gly) (interchain with G-Cter in SUMO2); alternate cross-link involves residue Lys105. A Phosphoserine modification is found at Ser114. Lys119 participates in a covalent cross-link: Glycyl lysine isopeptide (Lys-Gly) (interchain with G-Cter in SUMO); alternate. Lys119 is covalently cross-linked (Glycyl lysine isopeptide (Lys-Gly) (interchain with G-Cter in SUMO2); alternate). Lys119 participates in a covalent cross-link: Glycyl lysine isopeptide (Lys-Gly) (interchain with G-Cter in SUMO1); alternate. Over residues Pro131–Glu168 the composition is skewed to basic and acidic residues. Residues Lys136 and Lys150 each participate in a glycyl lysine isopeptide (Lys-Gly) (interchain with G-Cter in SUMO2) cross-link. Lys155 participates in a covalent cross-link: Glycyl lysine isopeptide (Lys-Gly) (interchain with G-Cter in SUMO); alternate. Residue Lys155 forms a Glycyl lysine isopeptide (Lys-Gly) (interchain with G-Cter in SUMO2); alternate linkage. Glycyl lysine isopeptide (Lys-Gly) (interchain with G-Cter in SUMO2) cross-links involve residues Lys160 and Lys166. Residue Lys174 forms a Glycyl lysine isopeptide (Lys-Gly) (interchain with G-Cter in SUMO2); alternate linkage. Lys174 is subject to N6-acetyllysine; alternate. Positions Lys181–Glu201 are enriched in basic and acidic residues. Lys206 participates in a covalent cross-link: Glycyl lysine isopeptide (Lys-Gly) (interchain with G-Cter in SUMO2). N6-acetyllysine is present on Lys282. A Glycyl lysine isopeptide (Lys-Gly) (interchain with G-Cter in SUMO2) cross-link involves residue Lys338. 2 interaction with DNA regions span residues Lys427–Tyr428 and Arg490–Lys495. The region spanning Ser434 to Phe767 is the Topo IB-type catalytic domain. Ser508 is subject to Phosphoserine; by CK2. A Glycyl lysine isopeptide (Lys-Gly) (interchain with G-Cter in SUMO2) cross-link involves residue Lys551. The interval Thr587–Lys589 is interaction with DNA. Glycyl lysine isopeptide (Lys-Gly) (interchain with G-Cter in SUMO2) cross-links involve residues Lys644, Lys702, and Lys714. Tyr725 acts as the O-(3'-phospho-DNA)-tyrosine intermediate in catalysis.

It belongs to the type IB topoisomerase family. As to quaternary structure, monomer. Interacts with ERCC6. Interacts with TPRN; TPRN interacts with a number of DNA damage response proteins, is recruited to sites of DNA damage and may play a role in DNA damage repair. Sumoylated. Lys-119 is the main site of sumoylation. Sumoylation plays a role in partitioning TOP1 between nucleoli and nucleoplasm. Levels are dramatically increased on camptothecin (CPT) treatment. Post-translationally, phosphorylation at Ser-508 by CK2 increases binding to supercoiled DNA and sensitivity to camptothecin.

The protein localises to the nucleus. It localises to the nucleolus. It is found in the nucleoplasm. The enzyme catalyses ATP-independent breakage of single-stranded DNA, followed by passage and rejoining.. Functionally, releases the supercoiling and torsional tension of DNA introduced during the DNA replication and transcription by transiently cleaving and rejoining one strand of the DNA duplex. Introduces a single-strand break via transesterification at a target site in duplex DNA. The scissile phosphodiester is attacked by the catalytic tyrosine of the enzyme, resulting in the formation of a DNA-(3'-phosphotyrosyl)-enzyme intermediate and the expulsion of a 5'-OH DNA strand. The free DNA strand then rotates around the intact phosphodiester bond on the opposing strand, thus removing DNA supercoils. Finally, in the religation step, the DNA 5'-OH attacks the covalent intermediate to expel the active-site tyrosine and restore the DNA phosphodiester backbone. Regulates the alternative splicing of tissue factor (F3) pre-mRNA in endothelial cells. Involved in the circadian transcription of the core circadian clock component BMAL1 by altering the chromatin structure around the ROR response elements (ROREs) on the BMAL1 promoter. This chain is DNA topoisomerase 1 (Top1), found in Mus musculus (Mouse).